Reading from the N-terminus, the 243-residue chain is NEDD4-binding protein 2-like 1 (243 aa).

A disordered region spans residues 1 to 38; the sequence is MEDSFLQSFGRLSLQPQQQQQRQRPPRPPPRGTPPRRH.

As to quaternary structure, interacts with dynactin subunit proteins, including DCTN4, DCTN5 and DCTN5.

Functionally, might play a role in adipocyte differentiation and triglyceride accumulation. The polypeptide is NEDD4-binding protein 2-like 1 (N4BP2L1) (Homo sapiens (Human)).